The chain runs to 194 residues: Probable thymidylate kinase (194 aa).

Position 7-14 (7-14 (GIDGSGKT)) interacts with ATP.

It belongs to the thymidylate kinase family.

It catalyses the reaction dTMP + ATP = dTDP + ADP. The protein is Probable thymidylate kinase (tmk) of Methanothermobacter thermautotrophicus (strain ATCC 29096 / DSM 1053 / JCM 10044 / NBRC 100330 / Delta H) (Methanobacterium thermoautotrophicum).